A 60-amino-acid chain; its full sequence is Large ribosomal subunit protein eL37 (60 aa).

Zn(2+)-binding residues include cysteine 18, cysteine 21, cysteine 33, and cysteine 36. Residues 18–36 (CRRCGKNSYHVRKKVCAAC) form a C4-type zinc finger.

It belongs to the eukaryotic ribosomal protein eL37 family. Zn(2+) is required as a cofactor.

Functionally, binds to the 23S rRNA. The polypeptide is Large ribosomal subunit protein eL37 (rpl37e) (Methanothermobacter thermautotrophicus (strain ATCC 29096 / DSM 1053 / JCM 10044 / NBRC 100330 / Delta H) (Methanobacterium thermoautotrophicum)).